Here is a 100-residue protein sequence, read N- to C-terminus: Large ribosomal subunit protein uL23 (100 aa).

It belongs to the universal ribosomal protein uL23 family. In terms of assembly, part of the 50S ribosomal subunit. Contacts protein L29, and trigger factor when it is bound to the ribosome.

One of the early assembly proteins it binds 23S rRNA. One of the proteins that surrounds the polypeptide exit tunnel on the outside of the ribosome. Forms the main docking site for trigger factor binding to the ribosome. The chain is Large ribosomal subunit protein uL23 from Buchnera aphidicola subsp. Schizaphis graminum (strain Sg).